Reading from the N-terminus, the 943-residue chain is MTDYKATLNLPDTAFPMKAGLPQREPQILQRWDSIGLYGKLREIGKDRPKFVLHDGPPYANGSIHIGHAVNKILKDMIIRSKTLAGFDAPYVPGWDCHGLPIEHKVEVTHGKNLSSDQTRELCRAYASEQIEGQKAEFIRLGVLGDWANPYKTMNFANEAGEIRALAEMVKGGFVFKGLKPVNWCFDCGSALAEAEVEYQDKKSATIDVAFPVADEAKLAGAFGLAKLAKPAAIVIWTTTPWTIPANQALNVHPEFNYALVDTGERLLVLAEELVESCLARYNLEGSVIATAPGSALELINFRHPFYDRLSPVYLAEYVELGAGTGVVHSAPAYGEDDFVTCKRYGMVNDDILNPVQSNGVYATSLEFFGGQFIWKANPAIVDKLSEVGALLHTETISHSYMHCWRHKTPLIYRATAQWFVGMDKQPAAGDTLRQRALQAIEDTQFVPAWGQARLHSMIANRPDWCISRQRNWGVPIPFFLNKESGDLHPRTVELMEEVAQRVEQEGIEAWFKMDAAELLGDEAAQYDKISDTLDVWFDSGTTHWHVLRGSHPMGHESGPRADLYLEGSDQHRGWFHSSLLTGCAIDNHAPYRELLTHGFTVDENGRKMSKSLGNVIAPQKVNDTLGADIMRLWVSATDYSGEMAVSDQILQRSADAYRRIRNTARFLLSNLSGFNPATDLLPAEDMLALDRWAVDRTLLLQRELELHYGEYRFWNVYSKVHNFCVQELGGFYLDIIKDRQYTTGANSKARRSAQTALYHISEALVRWIAPILAFTADELWEYLPGERNESVMLNTWYEGLTELPADFELGREYWEGVMAVKVAVNKELEVQRAAKAVGGNLQAEVTLFAEDGLAADLAKLSNELRFVLITSTASLAPFAQAPADAVATEVPGLKLKVVKSAFPKCARCWHCREDVGVHPEHPEICGRCVDNISGAGEVRHYA.

The 'HIGH' region motif lies at Pro58–His68. Glu567 serves as a coordination point for L-isoleucyl-5'-AMP. Positions Lys608–Ser612 match the 'KMSKS' region motif. Lys611 provides a ligand contact to ATP. The Zn(2+) site is built by Cys906, Cys909, Cys926, and Cys929.

Belongs to the class-I aminoacyl-tRNA synthetase family. IleS type 1 subfamily. Monomer. Zn(2+) is required as a cofactor.

It localises to the cytoplasm. The catalysed reaction is tRNA(Ile) + L-isoleucine + ATP = L-isoleucyl-tRNA(Ile) + AMP + diphosphate. Its function is as follows. Catalyzes the attachment of isoleucine to tRNA(Ile). As IleRS can inadvertently accommodate and process structurally similar amino acids such as valine, to avoid such errors it has two additional distinct tRNA(Ile)-dependent editing activities. One activity is designated as 'pretransfer' editing and involves the hydrolysis of activated Val-AMP. The other activity is designated 'posttransfer' editing and involves deacylation of mischarged Val-tRNA(Ile). The sequence is that of Isoleucine--tRNA ligase from Pseudomonas fluorescens (strain ATCC BAA-477 / NRRL B-23932 / Pf-5).